Reading from the N-terminus, the 122-residue chain is Large ribosomal subunit protein uL14c (122 aa).

It belongs to the universal ribosomal protein uL14 family. Part of the 50S ribosomal subunit.

Its subcellular location is the plastid. It localises to the chloroplast. Functionally, binds to 23S rRNA. This Oltmannsiellopsis viridis (Marine flagellate) protein is Large ribosomal subunit protein uL14c.